Consider the following 375-residue polypeptide: Protein arginine N-methyltransferase 6 (375 aa).

The disordered stretch occupies residues 1-38 (MSQPKKRKLESGGGGEGGEGTEEEDGAEREAALERPRR). Threonine 21 is subject to Phosphothreonine. Positions 28-38 (EREAALERPRR) are enriched in basic and acidic residues. 3 positions are modified to asymmetric dimethylarginine; by autocatalysis: arginine 29, arginine 35, and arginine 37. Positions 44–374 (DQLYYECYSD…EEKTKDFAME (331 aa)) constitute an SAM-dependent MTase PRMT-type domain. S-adenosyl-L-methionine contacts are provided by histidine 57, arginine 66, glycine 90, glutamate 112, and glutamate 141. Catalysis depends on residues glutamate 155 and glutamate 164.

Belongs to the class I-like SAM-binding methyltransferase superfamily. Protein arginine N-methyltransferase family. PRMT6 subfamily. In terms of assembly, interacts with EPB41L3 and NCOA1. (Microbial infection) Interacts with (and methylates) HIV-1 Tat, Rev and Nucleocapsid protein p7 (NC). As to quaternary structure, (Microbial infection) Interacts with human cytomegalovirus protein UL69. Post-translationally, automethylation enhances its stability and antiretroviral activity. In terms of tissue distribution, highly expressed in kidney and testis.

Its subcellular location is the nucleus. The enzyme catalyses L-arginyl-[protein] + 2 S-adenosyl-L-methionine = N(omega),N(omega)-dimethyl-L-arginyl-[protein] + 2 S-adenosyl-L-homocysteine + 2 H(+). Functionally, arginine methyltransferase that can catalyze the formation of both omega-N monomethylarginine (MMA) and asymmetrical dimethylarginine (aDMA), with a strong preference for the formation of aDMA. Preferentially methylates arginyl residues present in a glycine and arginine-rich domain and displays preference for monomethylated substrates. Specifically mediates the asymmetric dimethylation of histone H3 'Arg-2' to form H3R2me2a. H3R2me2a represents a specific tag for epigenetic transcriptional repression and is mutually exclusive with methylation on histone H3 'Lys-4' (H3K4me2 and H3K4me3). Acts as a transcriptional repressor of various genes such as HOXA2, THBS1 and TP53. Repression of TP53 blocks cellular senescence. Also methylates histone H2A and H4 'Arg-3' (H2AR3me and H4R3me, respectively). Acts as a regulator of DNA base excision during DNA repair by mediating the methylation of DNA polymerase beta (POLB), leading to the stimulation of its polymerase activity by enhancing DNA binding and processivity. Methylates HMGA1. Regulates alternative splicing events. Acts as a transcriptional coactivator of a number of steroid hormone receptors including ESR1, ESR2, PGR and NR3C1. Promotes fasting-induced transcriptional activation of the gluconeogenic program through methylation of the CRTC2 transcription coactivator. May play a role in innate immunity against HIV-1 in case of infection by methylating and impairing the function of various HIV-1 proteins such as Tat, Rev and Nucleocapsid protein p7 (NC). Methylates GPS2, protecting GPS2 from ubiquitination and degradation. Methylates SIRT7, inhibiting SIRT7 histone deacetylase activity and promoting mitochondria biogenesis. The sequence is that of Protein arginine N-methyltransferase 6 (PRMT6) from Homo sapiens (Human).